The chain runs to 203 residues: DNA-directed RNA polymerase III subunit rpc8 (203 aa).

The protein belongs to the eukaryotic RPB7/RPC8 RNA polymerase subunit family. Component of the RNA polymerase III (Pol III) complex consisting of 17 subunits. Rpc25/rpc8 and rpc17/rpc9 form a Pol III subcomplex.

It localises to the cytoplasm. The protein localises to the nucleus. Functionally, DNA-dependent RNA polymerase catalyzes the transcription of DNA into RNA using the four ribonucleoside triphosphates as substrates. Specific peripheric component of RNA polymerase III which synthesizes small RNAs, such as 5S rRNA and tRNA. This is DNA-directed RNA polymerase III subunit rpc8 (rpc25) from Schizosaccharomyces pombe (strain 972 / ATCC 24843) (Fission yeast).